The following is a 200-amino-acid chain: Phosphoheptose isomerase (200 aa).

The 163-residue stretch at 37-199 (VLGCITAGGK…DVQLLGEQDL (163 aa)) folds into the SIS domain. 52–54 (NGG) provides a ligand contact to substrate. Zn(2+)-binding residues include His61 and Glu65. Residues Glu65, 94-95 (ND), 120-122 (TTS), Ser125, and Gln175 contribute to the substrate site. Zn(2+) is bound by residues Gln175 and His183.

It belongs to the SIS family. GmhA subfamily. In terms of assembly, homotetramer. It depends on Zn(2+) as a cofactor.

The protein resides in the cytoplasm. It carries out the reaction 2 D-sedoheptulose 7-phosphate = D-glycero-alpha-D-manno-heptose 7-phosphate + D-glycero-beta-D-manno-heptose 7-phosphate. It participates in carbohydrate biosynthesis; D-glycero-D-manno-heptose 7-phosphate biosynthesis; D-glycero-alpha-D-manno-heptose 7-phosphate and D-glycero-beta-D-manno-heptose 7-phosphate from sedoheptulose 7-phosphate: step 1/1. Its function is as follows. Catalyzes the isomerization of sedoheptulose 7-phosphate in D-glycero-D-manno-heptose 7-phosphate. The protein is Phosphoheptose isomerase of Methylibium petroleiphilum (strain ATCC BAA-1232 / LMG 22953 / PM1).